Reading from the N-terminus, the 1032-residue chain is MGPAKKPAMAGVNSKAEREADLVMGTNNSSIVSKRSVEMLYYSKPHFFRYFVKKPQRRSPLINRGYWLRMHAMAETVRKFMREPSDKPKFVLNLGCGFDPLPYMLLSADNDLCRDTTFVDIDYEKLMVNKKTAIRKTDEITQLLEDVEFLPDDSAVQIRSKPYLAIGCDLKNLTKLDTVLRAEVLPSECAVLFLAEVSLTYMDVKSANAVVSWASGLSNDAQFCILEQFFPDGPDHPFASTMMKHFKKLGAPLYSIHEYPSLNEQEQRFKDAGWNHAHARSLWDLWSDDEFVDGSLRASLDAIEPFDEWEEFALFGSHYFLLHASTRPRVSETATRTLTGLDPQTDKSGHFRLLAKCPPGSGQRRFGAVIPDSDKAVGHHSGLGRQTRLSSTELYTKSEGTTKTHEFPPGDIPARMCHTVTCLSNQDCLLVGGRASPASGFKDCWVRQGNQWRSTQSLPVPRFRHSAVKVTLDSEYVLVYGGKTSDGTTLNTWLAWSSKKQDWQQVETNSIHIKARFGACLGSINDTSGVLFGGIGAEGTILGDFFTWKLHQRSDGSLFMELTDHTDDLRRTSSLFNQIHRFGATVNQTAWGLVIVGGIVPRGIITHDKEIMLLDSTELTKCIASGWPSNHTIISALGLGNRLDGPRPLLVGHVSCAIDSKEILILGGGAVCFSFGTYWTEGTWLLQDVSSTTENDWTLIPESVEPNKSQSEKATSKPSAQSQNEPYRAAEVITPIPRVCVQNPAQFQDILAEGRPVIIEGSDVGPCTELWTKEYLTSAVGGDRKIVVHEAQSAHMSFQTKNFSYATKTFGTFMDEVYAGDRQYLRSISAEQPTKLPANLAVDFPSLSHDFRLPESLSIVTDNTHSSPLRISGPVTLWLHYDVMANVLCQIRGEKRLILFPPSDVQYLQVPPGASSSTINIFQSNGSVASIPHTSPQEAVLKRGDILFIPPLWLHTASPTGDVSVAVNVFFRNLSKGYAAGRDVYGNRDLQAYEKARNDIQKMAKSFDGLPSEMARFYLLRLAQELKDKAEK.

Residues arginine 69, glycine 95, aspartate 122, 169-170, and glutamate 196 contribute to the S-adenosyl-L-methionine site; that span reads DL. Positions 702 to 726 are disordered; it reads ESVEPNKSQSEKATSKPSAQSQNEP. A compositionally biased stretch (polar residues) spans 716-725; it reads SKPSAQSQNE. Residues 833 to 988 enclose the JmjC domain; sequence PTKLPANLAV…AAGRDVYGNR (156 aa).

Belongs to the methyltransferase superfamily. LCMT family.

The enzyme catalyses 7-[(3S)-3-amino-3-carboxypropyl]wyosine(37) in tRNA(Phe) + S-adenosyl-L-methionine = 7-[(3S)-(3-amino-3-methoxycarbonyl)propyl]wyosine(37) in tRNA(Phe) + S-adenosyl-L-homocysteine. It carries out the reaction 7-[(3S)-(3-amino-3-methoxycarbonyl)propyl]wyosine(37) in tRNA(Phe) + S-adenosyl-L-methionine + CO2 = wybutosine(37) in tRNA(Phe) + S-adenosyl-L-homocysteine + 2 H(+). The protein operates within tRNA modification; wybutosine-tRNA(Phe) biosynthesis. Functionally, probable S-adenosyl-L-methionine-dependent methyltransferase that acts as a component of the wybutosine biosynthesis pathway. Wybutosine is a hyper modified guanosine with a tricyclic base found at the 3'-position adjacent to the anticodon of eukaryotic phenylalanine tRNA. May methylate the carboxyl group of leucine residues to form alpha-leucine ester residues. In Aspergillus oryzae (strain ATCC 42149 / RIB 40) (Yellow koji mold), this protein is tRNA wybutosine-synthesizing protein 4 (ppm2).